We begin with the raw amino-acid sequence, 746 residues long: Double-stranded RNA-specific editase B2 (746 aa).

Disordered regions lie at residues 1–36 (MASVLGSGRGSGGLSSQLKCKSKRRRRRRSKRKDKV) and 50–105 (SPGT…PLEE). A compositionally biased stretch (basic residues) spans 20–34 (CKSKRRRRRRSKRKD). The interval 23–35 (KRRRRRRSKRKDK) is R-domain (ssRNA-binding). 2 DRBM domains span residues 126–192 (TPKN…SFVQ) and 284–348 (NPVV…ALFD). The region spanning 415 to 742 (VLSSGTKCIS…VRKPPEQDQF (328 aa)) is the A to I editase domain. Residue His-439 coordinates Zn(2+). The Proton donor role is filled by Glu-441. The Zn(2+) site is built by Cys-497 and Cys-562.

As to expression, brain specific.

The protein localises to the nucleus. Functionally, lacks editing activity. It prevents the binding of other ADAR enzymes to targets in vitro, and decreases the efficiency of these enzymes. Capable of binding to dsRNA but also to ssRNA. The sequence is that of Double-stranded RNA-specific editase B2 (Adarb2) from Rattus norvegicus (Rat).